Consider the following 465-residue polypeptide: Serine carboxypeptidase-like 19 (465 aa).

Residues methionine 1 to alanine 23 form the signal peptide. A substrate-binding site is contributed by threonine 77–glycine 79. Intrachain disulfides connect cysteine 82–cysteine 353, cysteine 246–cysteine 260, and cysteine 284–cysteine 320. Asparagine 103 carries N-linked (GlcNAc...) asparagine glycosylation. Aspartate 177–tyrosine 179 serves as a coordination point for substrate. Serine 178 is an active-site residue. The propeptide at aspartate 292–proline 317 is linker peptide. N-linked (GlcNAc...) asparagine glycosylation is found at asparagine 310 and asparagine 373. Aspartate 389 is an active-site residue. N-linked (GlcNAc...) asparagine glycosylation occurs at asparagine 405. Lysine 439–histidine 443 lines the substrate pocket. The active site involves histidine 443.

Belongs to the peptidase S10 family. In terms of assembly, heterodimer. In terms of processing, N-glycosylated. In terms of tissue distribution, expressed in roots and flowers, and at lower levels in young leaves and seedlings. Expressed in mature seeds and detected in expanding siliques.

It is found in the secreted. The enzyme catalyses 1-O-(trans-sinapoyl)-beta-D-glucose + choline = O-sinapoylcholine + D-glucose. Slightly inhibited by phenylmethylsulfonyl fluoride (PMSF). Its function is as follows. Involved in plants secondary metabolism. Functions as acyltransferase to form the sinapate ester sinapoylcholine also known as sinapine. Able to convert in vitro benzoylglucose into benzoylcholine. This chain is Serine carboxypeptidase-like 19, found in Arabidopsis thaliana (Mouse-ear cress).